Here is a 279-residue protein sequence, read N- to C-terminus: Ribosomal RNA large subunit methyltransferase E (279 aa).

A compositionally biased stretch (basic and acidic residues) spans 1-10 (MSDDDQKPED). The tract at residues 1 to 66 (MSDDDQKPED…MKKGGDARAA (66 aa)) is disordered. S-adenosyl-L-methionine-binding residues include G136, W138, D154, D170, and D194. The Proton acceptor role is filled by K234.

The protein belongs to the class I-like SAM-binding methyltransferase superfamily. RNA methyltransferase RlmE family.

The protein localises to the cytoplasm. The catalysed reaction is uridine(2552) in 23S rRNA + S-adenosyl-L-methionine = 2'-O-methyluridine(2552) in 23S rRNA + S-adenosyl-L-homocysteine + H(+). Functionally, specifically methylates the uridine in position 2552 of 23S rRNA at the 2'-O position of the ribose in the fully assembled 50S ribosomal subunit. This chain is Ribosomal RNA large subunit methyltransferase E, found in Maricaulis maris (strain MCS10) (Caulobacter maris).